A 71-amino-acid polypeptide reads, in one-letter code: Translational regulator CsrA (71 aa).

The protein belongs to the CsrA/RsmA family. As to quaternary structure, homodimer; the beta-strands of each monomer intercalate to form a hydrophobic core, while the alpha-helices form wings that extend away from the core.

It localises to the cytoplasm. A key translational regulator that binds mRNA to regulate translation initiation and/or mRNA stability. Mediates global changes in gene expression, shifting from rapid growth to stress survival by linking envelope stress, the stringent response and the catabolite repression systems. Usually binds in the 5'-UTR; binding at or near the Shine-Dalgarno sequence prevents ribosome-binding, repressing translation, binding elsewhere in the 5'-UTR can activate translation and/or stabilize the mRNA. Its function is antagonized by small RNA(s). This chain is Translational regulator CsrA, found in Pseudoalteromonas atlantica (strain T6c / ATCC BAA-1087).